A 182-amino-acid polypeptide reads, in one-letter code: Histone deacetylase complex subunit SAP30L (182 aa).

Position 1 is an N-acetylmethionine (methionine 1). The segment covering 1–10 has biased composition (acidic residues); sequence MNGFSTEEDS. Residues 1–22 form a disordered region; that stretch reads MNGFSTEEDSREGPPAAPAAAP. Intrachain disulfides connect cysteine 28–cysteine 29 and cysteine 37–cysteine 73. The segment at 28–76 adopts an Atypical zinc-finger fold; the sequence is CCLIADGERCVRPAGNASFSKRVQKSISQKKLKLDIDKSVRHLYICDFH. Residue lysine 48 forms a Glycyl lysine isopeptide (Lys-Gly) (interchain with G-Cter in SUMO2) linkage. A disordered region spans residues 84–103; it reads RNKRKRKASDDGGDSPEHDA. Positions 85–90 match the Nuclear localization signal (NLS) motif; that stretch reads NKRKRK. Positions 87–89 are important for DNA and phosphoinositide binding; the sequence is RKR. Phosphoserine is present on residues serine 92 and serine 98. Residues lysine 154, lysine 165, and lysine 174 each participate in a glycyl lysine isopeptide (Lys-Gly) (interchain with G-Cter in SUMO2) cross-link.

Belongs to the SAP30 family. In terms of assembly, interacts with components of the histone deacetylase complex SIN3A, HDAC1 and HDAC2. Binds histones and nucleosomes. Interacts with FEZ1.

It localises to the nucleus. Its subcellular location is the nucleolus. In terms of biological role, functions as a transcription repressor, probably via its interaction with histone deacetylase complexes. Involved in the functional recruitment of the class 1 Sin3-histone deacetylase complex (HDAC) to the nucleolus. Binds DNA, apparently without sequence-specificity, and bends bound double-stranded DNA. Binds phosphoinositol phosphates (phosphoinositol 3-phosphate, phosphoinositol 4-phosphate and phosphoinositol 5-phosphate) via the same basic sequence motif that mediates DNA binding and nuclear import. The protein is Histone deacetylase complex subunit SAP30L (Sap30l) of Mus musculus (Mouse).